The primary structure comprises 968 residues: Protein translocase subunit SecA (968 aa).

ATP is bound by residues glutamine 99, 117–121 (GEGKT), and aspartate 631.

It belongs to the SecA family. As to quaternary structure, monomer and homodimer. Part of the essential Sec protein translocation apparatus which comprises SecA, SecYEG and auxiliary proteins SecDF. Other proteins may also be involved.

The protein localises to the cell inner membrane. It is found in the cytoplasm. It carries out the reaction ATP + H2O + cellular proteinSide 1 = ADP + phosphate + cellular proteinSide 2.. Functionally, part of the Sec protein translocase complex. Interacts with the SecYEG preprotein conducting channel. Has a central role in coupling the hydrolysis of ATP to the transfer of proteins into and across the cell membrane, serving as an ATP-driven molecular motor driving the stepwise translocation of polypeptide chains across the membrane. The protein is Protein translocase subunit SecA of Chlamydia muridarum (strain MoPn / Nigg).